The chain runs to 146 residues: UPF0735 ACT domain-containing protein TTE2621 (146 aa).

Residues 71 to 146 (TFSMVLEHMP…GVRKIEVLGE (76 aa)) enclose the ACT domain.

The protein belongs to the UPF0735 family.

The polypeptide is UPF0735 ACT domain-containing protein TTE2621 (Caldanaerobacter subterraneus subsp. tengcongensis (strain DSM 15242 / JCM 11007 / NBRC 100824 / MB4) (Thermoanaerobacter tengcongensis)).